The primary structure comprises 242 residues: Probable transcriptional regulatory protein BamMC406_2210 (242 aa).

This sequence belongs to the TACO1 family.

It localises to the cytoplasm. In Burkholderia ambifaria (strain MC40-6), this protein is Probable transcriptional regulatory protein BamMC406_2210.